Consider the following 35-residue polypeptide: Manganese peroxidase (35 aa).

Basic and acidic residues predominate over residues 1–11 (LSLLGHDERVT). The tract at residues 1-35 (LSLLGHDERVTPEPFDSVTAQNARGNQADVQSLPR) is disordered. Polar residues predominate over residues 18-35 (VTAQNARGNQADVQSLPR).

It belongs to the peroxidase family. Heme b is required as a cofactor. Ca(2+) serves as cofactor.

It carries out the reaction 2 Mn(2+) + H2O2 + 2 H(+) = 2 Mn(3+) + 2 H2O. Its function is as follows. Has manganese peroxidase activity. This is Manganese peroxidase from Irpex lacteus (Milk-white toothed polypore).